A 280-amino-acid polypeptide reads, in one-letter code: Small ribosomal subunit protein uS15m (280 aa).

This sequence belongs to the universal ribosomal protein uS15 family. In terms of assembly, component of the mitochondrial ribosome small subunit (28S) which comprises a 12S rRNA and about 30 distinct proteins. As to expression, expressed in anterior and posterior midgut primordia in stage 11 embryos. In stage 13 embryos, expression is high in the developing midgut and hindgut. In stage 16 embryos, expression is elevated in the midgut, hindgut, and in a small region that will give rise to pharyngeal muscles and to the stomatogastric nervous system. In larvae, expression is predominant in the gut, and head, presumably in pharyngeal muscles.

It is found in the mitochondrion. In terms of biological role, essential for gut mitochondrial activity. Might be involved in tissue specific growth factor production. This Drosophila melanogaster (Fruit fly) protein is Small ribosomal subunit protein uS15m (bonsai).